The chain runs to 450 residues: Phosphoglucosamine mutase (450 aa).

The active-site Phosphoserine intermediate is Ser-97. Residues Ser-97, Asp-236, Asp-238, and Asp-240 each coordinate Mg(2+). At Ser-97 the chain carries Phosphoserine.

Belongs to the phosphohexose mutase family. It depends on Mg(2+) as a cofactor. Activated by phosphorylation.

The catalysed reaction is alpha-D-glucosamine 1-phosphate = D-glucosamine 6-phosphate. In terms of biological role, catalyzes the conversion of glucosamine-6-phosphate to glucosamine-1-phosphate. This chain is Phosphoglucosamine mutase, found in Prochlorococcus marinus (strain MIT 9215).